The following is a 236-amino-acid chain: Endonuclease V (236 aa).

Mg(2+) is bound by residues Asp47 and Asp115.

It belongs to the endonuclease V family. Requires Mg(2+) as cofactor.

It is found in the cytoplasm. The enzyme catalyses Endonucleolytic cleavage at apurinic or apyrimidinic sites to products with a 5'-phosphate.. DNA repair enzyme involved in the repair of deaminated bases. Selectively cleaves double-stranded DNA at the second phosphodiester bond 3' to a deoxyinosine leaving behind the intact lesion on the nicked DNA. This is Endonuclease V from Xanthomonas campestris pv. campestris (strain 8004).